Here is a 524-residue protein sequence, read N- to C-terminus: 2-isopropylmalate synthase (524 aa).

Residues 5 to 267 (VIIFDTTLRD…HTNINHQEIF (263 aa)) enclose the Pyruvate carboxyltransferase domain. The Mn(2+) site is built by aspartate 14, histidine 202, histidine 204, and asparagine 238. The segment at 392–524 (SLDYFSVQSG…SKHQNNQETV (133 aa)) is regulatory domain.

Belongs to the alpha-IPM synthase/homocitrate synthase family. LeuA type 1 subfamily. Homodimer. The cofactor is Mn(2+).

It is found in the cytoplasm. It carries out the reaction 3-methyl-2-oxobutanoate + acetyl-CoA + H2O = (2S)-2-isopropylmalate + CoA + H(+). It functions in the pathway amino-acid biosynthesis; L-leucine biosynthesis; L-leucine from 3-methyl-2-oxobutanoate: step 1/4. Its function is as follows. Catalyzes the condensation of the acetyl group of acetyl-CoA with 3-methyl-2-oxobutanoate (2-ketoisovalerate) to form 3-carboxy-3-hydroxy-4-methylpentanoate (2-isopropylmalate). The sequence is that of 2-isopropylmalate synthase from Serratia proteamaculans (strain 568).